Here is a 273-residue protein sequence, read N- to C-terminus: Putative pyruvate, phosphate dikinase regulatory protein (273 aa).

153-160 (GVSRTSKS) serves as a coordination point for ADP.

This sequence belongs to the pyruvate, phosphate/water dikinase regulatory protein family. PDRP subfamily.

The catalysed reaction is N(tele)-phospho-L-histidyl/L-threonyl-[pyruvate, phosphate dikinase] + ADP = N(tele)-phospho-L-histidyl/O-phospho-L-threonyl-[pyruvate, phosphate dikinase] + AMP + H(+). It carries out the reaction N(tele)-phospho-L-histidyl/O-phospho-L-threonyl-[pyruvate, phosphate dikinase] + phosphate + H(+) = N(tele)-phospho-L-histidyl/L-threonyl-[pyruvate, phosphate dikinase] + diphosphate. Bifunctional serine/threonine kinase and phosphorylase involved in the regulation of the pyruvate, phosphate dikinase (PPDK) by catalyzing its phosphorylation/dephosphorylation. The protein is Putative pyruvate, phosphate dikinase regulatory protein of Ehrlichia canis (strain Jake).